The sequence spans 563 residues: Arginine--tRNA ligase (563 aa).

The short motif at 137 to 147 (ANPTGLLHMGN) is the 'HIGH' region element.

Belongs to the class-I aminoacyl-tRNA synthetase family. As to quaternary structure, monomer.

It is found in the cytoplasm. The catalysed reaction is tRNA(Arg) + L-arginine + ATP = L-arginyl-tRNA(Arg) + AMP + diphosphate. This is Arginine--tRNA ligase from Desulforudis audaxviator (strain MP104C).